Reading from the N-terminus, the 120-residue chain is uncharacterized protein (120 aa).

An RING-type zinc finger spans residues cysteine 70–lysine 109.

This is an uncharacterized protein from Orgyia pseudotsugata multicapsid polyhedrosis virus (OpMNPV).